The chain runs to 268 residues: Zwei Ig domain protein zig-8 (268 aa).

An N-terminal signal peptide occupies residues 1–21; the sequence is MRRFSNICVILFSFLYATGHG. 2 consecutive Ig-like C2-type domains span residues 40-128 and 140-251; these read PSQT…NTVY and PSPS…NSAT. Cysteines 57 and 118 form a disulfide. N-linked (GlcNAc...) asparagine glycosylation is found at asparagine 82, asparagine 155, asparagine 164, and asparagine 191. Cysteines 165 and 226 form a disulfide.

As to expression, expressed in PVT neurons and pharyngeal muscles.

The protein resides in the secreted. Its function is as follows. Together with zig-5, required postembryonically to maintain the position of ASI and ASH head neuron cell bodies and ventral nerve cord axons of PVQ, PVP and HSN neurons by preventing their displacement that could occur during body growth and movement. May act by reducing L1CAM-like protein sax-7 (long isoform) adhesion. The chain is Zwei Ig domain protein zig-8 from Caenorhabditis elegans.